The following is a 907-amino-acid chain: Protein translocase subunit SecA (907 aa).

Residues Q87, 105–109, and D510 each bind ATP; that span reads GEGKT. The Zn(2+) site is built by C892, C894, C903, and H904.

This sequence belongs to the SecA family. As to quaternary structure, monomer and homodimer. Part of the essential Sec protein translocation apparatus which comprises SecA, SecYEG and auxiliary proteins SecDF-YajC and YidC. The cofactor is Zn(2+).

It is found in the cell inner membrane. Its subcellular location is the cytoplasm. It carries out the reaction ATP + H2O + cellular proteinSide 1 = ADP + phosphate + cellular proteinSide 2.. Its function is as follows. Part of the Sec protein translocase complex. Interacts with the SecYEG preprotein conducting channel. Has a central role in coupling the hydrolysis of ATP to the transfer of proteins into and across the cell membrane, serving both as a receptor for the preprotein-SecB complex and as an ATP-driven molecular motor driving the stepwise translocation of polypeptide chains across the membrane. The chain is Protein translocase subunit SecA from Acinetobacter baumannii (strain ACICU).